The following is a 377-amino-acid chain: Geranylgeranyl transferase type-1 subunit beta (377 aa).

4 PFTB repeats span residues 144–186 (KEAC…YMLN), 193–234 (MKKA…CLMG), 245–284 (LNRI…KLLK), and 291–333 (FEKN…SLME). Residues 219-221 (HGG) and 263-266 (RPNK) each bind geranylgeranyl diphosphate. Residues Asp-269 and Cys-271 each contribute to the Zn(2+) site. 272–275 (YSFW) provides a ligand contact to geranylgeranyl diphosphate. His-321 contributes to the Zn(2+) binding site.

Belongs to the protein prenyltransferase subunit beta family. As to quaternary structure, heterodimer of FNTA and PGGT1B. PGGT1B mediates interaction with substrate peptides. Zn(2+) serves as cofactor. The cofactor is Mg(2+).

The enzyme catalyses geranylgeranyl diphosphate + L-cysteinyl-[protein] = S-geranylgeranyl-L-cysteinyl-[protein] + diphosphate. Its function is as follows. Catalyzes the transfer of a geranyl-geranyl moiety from geranyl-geranyl pyrophosphate to a cysteine at the fourth position from the C-terminus of proteins having the C-terminal sequence Cys-aliphatic-aliphatic-X. Known substrates include RAC1, RAC2, RAP1A and RAP1B. This chain is Geranylgeranyl transferase type-1 subunit beta (PGGT1B), found in Homo sapiens (Human).